A 257-amino-acid chain; its full sequence is Acetylglutamate kinase (257 aa).

Residues 43-44, Arg-65, and Asn-157 contribute to the substrate site; that span reads GG. Residues 180-185 and 208-210 each bind ATP; these read DVSGIL and IIT.

This sequence belongs to the acetylglutamate kinase family. ArgB subfamily. Homodimer.

The protein localises to the cytoplasm. The enzyme catalyses N-acetyl-L-glutamate + ATP = N-acetyl-L-glutamyl 5-phosphate + ADP. Its pathway is amino-acid biosynthesis; L-arginine biosynthesis; N(2)-acetyl-L-ornithine from L-glutamate: step 2/4. Catalyzes the ATP-dependent phosphorylation of N-acetyl-L-glutamate. The polypeptide is Acetylglutamate kinase (Photorhabdus laumondii subsp. laumondii (strain DSM 15139 / CIP 105565 / TT01) (Photorhabdus luminescens subsp. laumondii)).